Consider the following 474-residue polypeptide: tRNA-2-methylthio-N(6)-dimethylallyladenosine synthase (474 aa).

The region spanning 3-120 is the MTTase N-terminal domain; it reads KKLLIKTWGC…LPEMIKQSQT (118 aa). [4Fe-4S] cluster-binding residues include C12, C49, C83, C157, C161, and C164. Positions 143–375 constitute a Radical SAM core domain; that stretch reads RAEGATAFVS…QQTINAQAMR (233 aa). Positions 378 to 441 constitute a TRAM domain; that stretch reads RLMLATEQRV…ANSLRGELVR (64 aa).

It belongs to the methylthiotransferase family. MiaB subfamily. In terms of assembly, monomer. [4Fe-4S] cluster is required as a cofactor.

Its subcellular location is the cytoplasm. It catalyses the reaction N(6)-dimethylallyladenosine(37) in tRNA + (sulfur carrier)-SH + AH2 + 2 S-adenosyl-L-methionine = 2-methylsulfanyl-N(6)-dimethylallyladenosine(37) in tRNA + (sulfur carrier)-H + 5'-deoxyadenosine + L-methionine + A + S-adenosyl-L-homocysteine + 2 H(+). In terms of biological role, catalyzes the methylthiolation of N6-(dimethylallyl)adenosine (i(6)A), leading to the formation of 2-methylthio-N6-(dimethylallyl)adenosine (ms(2)i(6)A) at position 37 in tRNAs that read codons beginning with uridine. This is tRNA-2-methylthio-N(6)-dimethylallyladenosine synthase from Vibrio parahaemolyticus serotype O3:K6 (strain RIMD 2210633).